Consider the following 130-residue polypeptide: Small ribosomal subunit protein uS9 (130 aa).

This sequence belongs to the universal ribosomal protein uS9 family.

This chain is Small ribosomal subunit protein uS9, found in Xylella fastidiosa (strain 9a5c).